Consider the following 352-residue polypeptide: tRNA pseudouridine synthase D (352 aa).

Asp-81 (nucleophile) is an active-site residue. The 147-residue stretch at 157-303 (GIPNYFGVQR…MEHERRILRL (147 aa)) folds into the TRUD domain.

The protein belongs to the pseudouridine synthase TruD family.

The enzyme catalyses uridine(13) in tRNA = pseudouridine(13) in tRNA. Functionally, responsible for synthesis of pseudouridine from uracil-13 in transfer RNAs. The sequence is that of tRNA pseudouridine synthase D from Pseudomonas syringae pv. tomato (strain ATCC BAA-871 / DC3000).